The chain runs to 307 residues: Transcription initiation factor IIB (307 aa).

The TFIIB-type zinc-finger motif lies at 11 to 42 (FTEECPACGSAEIVFDEERGEYVCANCGLVTE). Positions 15, 18, 34, and 37 each coordinate Zn(2+). A disordered region spans residues 48–69 (PGPEWRHFNPDQRQRRSRTGEP). Over residues 50 to 69 (PEWRHFNPDQRQRRSRTGEP) the composition is skewed to basic and acidic residues. A run of 2 repeats spans residues 123–207 (LELE…QRRL) and 218–299 (DHLP…EICE).

It belongs to the TFIIB family.

Stabilizes TBP binding to an archaeal box-A promoter. Also responsible for recruiting RNA polymerase II to the pre-initiation complex (DNA-TBP-TFIIB). In Methanopyrus kandleri (strain AV19 / DSM 6324 / JCM 9639 / NBRC 100938), this protein is Transcription initiation factor IIB.